The primary structure comprises 199 residues: DnaJ homolog subfamily C member 5B (199 aa).

2 positions are modified to phosphoserine: serine 14 and serine 16. The J domain occupies 19–84 (SLYEILGLHK…SKRNIYDKYG (66 aa)).

In terms of assembly, interacts with the chaperone complex consisting of HSC70 and SGTA. In terms of processing, palmitoylated.

The protein localises to the membrane. The sequence is that of DnaJ homolog subfamily C member 5B (Dnajc5b) from Mus musculus (Mouse).